The sequence spans 1551 residues: Dual oxidase 1 (1551 aa).

An N-terminal signal peptide occupies residues 1-21; the sequence is MGFCLALTWTFLVGSWTSMGA. At 22 to 596 the chain is on the extracellular side; the sequence is QKPISWEVQR…YFEGSGFGFG (575 aa). The interval 26–593 is peroxidase-like; mediates peroxidase activity; that stretch reads SWEVQRFDGW…MQDYFEGSGF (568 aa). Asn-94 carries an N-linked (GlcNAc...) asparagine glycan. The disordered stretch occupies residues 197–222; sequence LASGPDPAFPRNAQPPLLMWSAPDPA. 4 N-linked (GlcNAc...) asparagine glycosylation sites follow: Asn-342, Asn-354, Asn-461, and Asn-534. A helical membrane pass occupies residues 597-617; sequence VTIGTLCCFPLVSLLSAWIVA. At 618-1044 the chain is on the cytoplasmic side; sequence RLRKKNFKKL…KRFIENYRRH (427 aa). 3 EF-hand domains span residues 815-850, 851-886, and 895-930; these read PQDM…FMKG, SPEE…FIEI, and QLTE…HDSE. Residues Asp-828, Asp-830, Asn-832, Tyr-834, Glu-839, Asp-864, Asp-866, Asn-868, and Glu-875 each contribute to the Ca(2+) site. The tract at residues 956 to 1248 is interaction with TXNDC11; the sequence is YISQEKICPS…GSFGLIQLPR (293 aa). A helical membrane pass occupies residues 1045–1065; that stretch reads IGCVAVFYAITGGLFLERAYY. The Extracellular segment spans residues 1066 to 1080; it reads YAFGAHHMGITDTTR. The chain crosses the membrane as a helical span at residues 1081 to 1101; that stretch reads VGIILSRGTAASISFMFSYIL. The Ferric oxidoreductase domain occupies 1087 to 1269; the sequence is RGTAASISFM…YVGDKLVSLS (183 aa). Residues 1102 to 1151 are Cytoplasmic-facing; sequence LTMCRNLITFLRETFLNRYVPFDAAVDFHRLIASTAIVLTVLHSAGHVVN. A helical transmembrane segment spans residues 1152-1172; the sequence is VYLFSISPLSVLSCLFPGLFH. Over 1173 to 1188 the chain is Extracellular; the sequence is NDGSEFPQKYYWWFFQ. A helical membrane pass occupies residues 1189 to 1209; the sequence is TVPGLTGVMLLLVLAIMYVFA. Residues 1210–1226 lie on the Cytoplasmic side of the membrane; the sequence is SHHFRRHSFRGFWLTHH. A helical membrane pass occupies residues 1227-1247; the sequence is LYILLYVLLIIHGSFGLIQLP. Residue Arg-1248 is a topological domain, extracellular. The chain crosses the membrane as a helical span at residues 1249–1269; sequence FHIFFLVPALIYVGDKLVSLS. The region spanning 1270–1376 is the FAD-binding FR-type domain; sequence RKKVEISVVK…DGPFGEGHQE (107 aa). Residues 1270-1551 lie on the Cytoplasmic side of the membrane; it reads RKKVEISVVK…THFSHHYENF (282 aa).

It in the N-terminal section; belongs to the peroxidase family. In terms of assembly, interacts with TPO and CYBA. Interacts with TXNDC11. Post-translationally, N-glycosylated. In terms of tissue distribution, expressed in thyrocytes (at protein level). Specifically expressed in thyroid.

It is found in the apical cell membrane. The enzyme catalyses NADH + O2 + H(+) = H2O2 + NAD(+). It carries out the reaction NADPH + O2 + H(+) = H2O2 + NADP(+). Its pathway is hormone biosynthesis; thyroid hormone biosynthesis. With respect to regulation, peroxidase activity is inhibited by aminobenzohydrazide. The NADPH oxidase activity is calcium-dependent. Functionally, generates hydrogen peroxide which is required for the activity of thyroid peroxidase/TPO and lactoperoxidase/LPO. Plays a role in thyroid hormones synthesis and lactoperoxidase-mediated antimicrobial defense at the surface of mucosa. May have its own peroxidase activity through its N-terminal peroxidase-like domain. This is Dual oxidase 1 (DUOX1) from Canis lupus familiaris (Dog).